The chain runs to 96 residues: UPF0235 protein ECA3630 (96 aa).

This sequence belongs to the UPF0235 family.

The chain is UPF0235 protein ECA3630 from Pectobacterium atrosepticum (strain SCRI 1043 / ATCC BAA-672) (Erwinia carotovora subsp. atroseptica).